The chain runs to 933 residues: Clumping factor A (933 aa).

Residues 1-39 (MNMKKKEKHAIRKKSIGVASVLVGTLIGFGLLSSKEADA) form the signal peptide. Positions 9-20 (HAIRKKSIGVAS) match the YSIRK-G/S signaling motif motif. 2 disordered regions span residues 34 to 200 (SKEA…SNKD) and 529 to 904 (FNNG…SEDE). The segment at 40-542 (SENSVTQSDS…SGSGDGIDKP (503 aa)) is ligand binding A region. Positions 47 to 65 (SDSASNESKSNDSSSVSAA) are enriched in low complexity. The span at 71–105 (TNVSDTKTSSNTNNGETSVAQNPAQQETTQSSSTN) shows a compositional bias: polar residues. The segment covering 106–132 (ATTEETPVTGEATTTTTNQANTPATTQ) has biased composition (low complexity). The span at 133-200 (SSNTNAEELV…PQSTDASNKD (68 aa)) shows a compositional bias: polar residues. The segment covering 547–565 (QPDEPGEIEPIPEDSDSDP) has biased composition (acidic residues). Over residues 566-598 (GSDSGSDSNSDSGSDSGSDSTSDSGSDSASDSD) the composition is skewed to low complexity. The span at 599–861 (SASDSDSASD…DSDSESDSNS (263 aa)) shows a compositional bias: acidic residues. A compositionally biased stretch (low complexity) spans 862-880 (DSESGSNNNVVPPNSPKNG). The span at 887 to 896 (NEAKDSKEPL) shows a compositional bias: basic and acidic residues. Positions 896-900 (LPDTG) match the LPXTG sorting signal motif. A Pentaglycyl murein peptidoglycan amidated threonine modification is found at Thr899. Positions 900–933 (GSEDEANTSLIWGLLASIGSLLLFRRKKENKDKK) are cleaved as a propeptide — removed by sortase.

This sequence belongs to the serine-aspartate repeat-containing protein (SDr) family.

It is found in the secreted. Its subcellular location is the cell wall. Its function is as follows. Cell surface-associated protein implicated in virulence. Promotes bacterial attachment exclusively to the gamma-chain of human fibrinogen. Induces formation of bacterial clumps, which diminish the ability of group IIA phospholipase A2 to cause bacterial phospholipid hydrolysis and killing. Significantly decreases macrophage phagocytosis possibly thanks to the clumps, clumped bacteria being too large to be phagocytosed. Dominant factor responsible for human platelet aggregation, which may be an important mechanism for initiating infective endocarditis. Enhances spleen cell proliferative response in vitro, contributing significantly to the immunostimulatory activity of S.aureus. The polypeptide is Clumping factor A (clfA) (Staphylococcus aureus (strain Newman)).